The following is a 192-amino-acid chain: MALQQIVEQTVTGLGYDLVEIERSAGGLLRVTIDLPWQPPVEGGPVVPEQFVTVEDCEKITRQLQFALEVDGADYTRLEVSSPGIDRPLRHEQDFTRFVGEVIDLTLKEPIGAAAEGQVSANRKKFRGTLERAEDGGWQIVWSDEPPVKPGQKVSKKRVPAPLQALGFTLEELREARLAPIVDFKGRSAKPV.

Belongs to the RimP family.

The protein localises to the cytoplasm. Required for maturation of 30S ribosomal subunits. This Delftia acidovorans (strain DSM 14801 / SPH-1) protein is Ribosome maturation factor RimP.